The following is a 163-amino-acid chain: SsrA-binding protein (163 aa).

The protein belongs to the SmpB family.

It is found in the cytoplasm. Its function is as follows. Required for rescue of stalled ribosomes mediated by trans-translation. Binds to transfer-messenger RNA (tmRNA), required for stable association of tmRNA with ribosomes. tmRNA and SmpB together mimic tRNA shape, replacing the anticodon stem-loop with SmpB. tmRNA is encoded by the ssrA gene; the 2 termini fold to resemble tRNA(Ala) and it encodes a 'tag peptide', a short internal open reading frame. During trans-translation Ala-aminoacylated tmRNA acts like a tRNA, entering the A-site of stalled ribosomes, displacing the stalled mRNA. The ribosome then switches to translate the ORF on the tmRNA; the nascent peptide is terminated with the 'tag peptide' encoded by the tmRNA and targeted for degradation. The ribosome is freed to recommence translation, which seems to be the essential function of trans-translation. The protein is SsrA-binding protein of Corynebacterium diphtheriae (strain ATCC 700971 / NCTC 13129 / Biotype gravis).